Reading from the N-terminus, the 658-residue chain is Protein cueball (658 aa).

At 1–543 (MSGVTARMEN…SYCKNSFNRT (543 aa)) the chain is on the extracellular side. Asparagine 25 and asparagine 122 each carry an N-linked (GlcNAc...) asparagine glycan. LDL-receptor class B repeat units follow at residues 100–142 (RKLY…NHDL), 152–195 (RHLY…DHYS), and 196–241 (NRIY…NSRY). EGF-like domains lie at 352–384 (EIPI…FEGE), 387–422 (DRSK…KRCE), and 458–495 (EEYT…KRCE). Intrachain disulfides connect cysteine 356-cysteine 365, cysteine 360-cysteine 375, cysteine 391-cysteine 401, cysteine 395-cysteine 410, cysteine 412-cysteine 421, cysteine 462-cysteine 472, cysteine 466-cysteine 483, and cysteine 485-cysteine 494. Asparagine 400 and asparagine 415 each carry an N-linked (GlcNAc...) asparagine glycan. Asparagine 476 carries an N-linked (GlcNAc...) asparagine glycan. N-linked (GlcNAc...) asparagine glycosylation is present at asparagine 541. A helical transmembrane segment spans residues 544 to 564 (VVYASLAFAASLFILMVILLI). Over 565–658 (VRRFYEEGRP…SCAGGDKNLP (94 aa)) the chain is Cytoplasmic.

The protein belongs to the cueball family.

Its subcellular location is the cell membrane. Functionally, has a role in spermatogenesis and oogenesis. This Culex quinquefasciatus (Southern house mosquito) protein is Protein cueball.